Consider the following 374-residue polypeptide: Translocating chain-associated membrane protein 1 (374 aa).

The Cytoplasmic portion of the chain corresponds to 2 to 29 (AIRKKSTKSPPVLSHEFILQNHADIVSC). The chain crosses the membrane as a helical span at residues 30 to 50 (VAMVFLLGLMFEITAKASIIF). Topologically, residues 51 to 76 (VTLQYNVTLPATEEQATESTSLYYYG) are lumenal. An N-linked (GlcNAc...) asparagine glycan is attached at N56. The chain crosses the membrane as a helical span at residues 77 to 97 (IKDLATVFFYMLVAIIIHAII). The Cytoplasmic portion of the chain corresponds to 98 to 121 (QEYVLDKINRRMHFSKTKHSKFNE). In terms of domain architecture, TLC spans 117–326 (SKFNESGQLS…NFQLRRWREH (210 aa)). Residues 122-142 (SGQLSAFYLFSCIWGTFILIS) form a helical membrane-spanning segment. Over 143–159 (ENYISDPTILWRAYPHN) the chain is Lumenal. Residues 160–180 (LMTFQMKFFYIAQLAYWFHAF) form a helical membrane-spanning segment. The Cytoplasmic segment spans residues 181 to 192 (PELYFQKTKKED). A helical membrane pass occupies residues 193–213 (IPRQLVYIGLYLFHIAGAYLL). The Lumenal portion of the chain corresponds to 214 to 217 (NLNH). Residues 218-238 (LGLVLLVLHYFVEFLFHISRL) form a helical membrane-spanning segment. Residues 239-251 (FYFSDEKYQKGFS) lie on the Cytoplasmic side of the membrane. Residues 252 to 272 (LWAVLFVLGRLLTLILSVLTV) traverse the membrane as a helical segment. Residues 273–297 (GFGLARAENQKLDFSAGNFNVLAVR) lie on the Lumenal side of the membrane. The chain crosses the membrane as a helical span at residues 298–318 (IAVLASICITQAFMMWKFINF). The Cytoplasmic segment spans residues 319-374 (QLRRWREHSTFQAPVVKKKPTVTKGRSSRKGTENGVNGTVTSNGADSPRNRKEKSS). Residues 334-347 (VKKKPTVTKGRSSR) are compositionally biased toward basic residues. Residues 334–374 (VKKKPTVTKGRSSRKGTENGVNGTVTSNGADSPRNRKEKSS) are disordered. Over residues 352 to 363 (NGVNGTVTSNGA) the composition is skewed to polar residues. S365 carries the phosphoserine modification.

Belongs to the TRAM family. In terms of assembly, interacts with SEC61B. May interact with Derlin-1/DERL1. N-glycosylated.

It is found in the endoplasmic reticulum membrane. Its function is as follows. Involved in the translocation of nascent protein chains into or through the endoplasmic reticulum (ER) membrane by facilitating the proper chain positioning at the SEC61 channel. Regulates the exposure of nascent secretory protein chain to the cytosol during translocation into the ER. May affect the phospholipid bilayer in the vicinity of the lateral gate of the SEC61 channel, thereby facilitating ER protein transport. Intimately associates with transmembrane (TM) domain of nascent membrane proteins during the entire integration process into the ER membrane. Associates with the second TM domain of G-protein-coupled receptor opsin/OPSD nascent chain in the ER membrane, which may facilitate its integration into the membrane. Under conditions of ER stress, participates in the disposal of misfolded ER membrane proteins during the unfolded protein response (UPR), an integrated stress response (ISR) pathway, by selectively retrotranslocating misfolded ER-membrane proteins from the ER into the cytosol where they are ubiquitinated and degraded by the proteasome. The polypeptide is Translocating chain-associated membrane protein 1 (TRAM1) (Canis lupus familiaris (Dog)).